Reading from the N-terminus, the 237-residue chain is Cytosolic-abundant heat soluble protein 1 (237 aa).

Basic and acidic residues-rich tracts occupy residues 1–17 (MPYE…KTEQ) and 91–105 (VDMR…EARR). Disordered regions lie at residues 1 to 35 (MPYE…VARE) and 85 to 105 (SGAS…EARR). Residues 98-201 (KLAEEARRDA…KEALERSRMA (104 aa)) are a coiled coil. CAHS motif stretches follow at residues 132-150 (YRHQ…LEKQ) and 169-187 (QKRE…LDRE). The interval 212-237 (AGHTVSGGTTVSSVDKVETVRERKHH) is disordered. Residues 226–237 (DKVETVRERKHH) show a composition bias toward basic and acidic residues.

This sequence belongs to the Cytosolic-abundant heat soluble protein (CAHS) family.

It is found in the cytoplasm. It localises to the nucleus. In terms of biological role, CAHS proteins are cytosolic heat soluble proteins that seem to contribute to the anhydrobiosis in tardigrades, but their specific mechanisms are yet to be identified. It is possible that protection during anhydrobiosis might occur via the stabilization of vitrifying small molecules such as sugars, but not via the direct glass transition of CAHS proteins themselves. This chain is Cytosolic-abundant heat soluble protein 1, found in Ramazzottius varieornatus (Water bear).